A 370-amino-acid chain; its full sequence is Transcription factor E2F2 (370 aa).

The segment at 1-73 (MYKRKTASIV…QSQSQPGQQR (73 aa)) is disordered. A compositionally biased stretch (low complexity) spans 15-26 (SAAGTTSSAMMM). The span at 31 to 49 (AETSVRSQSYESTPVSMDT) shows a compositional bias: polar residues. Residues 59 to 73 (SPSNSQSQSQPGQQR) show a composition bias toward low complexity. The DNA-binding element occupies 72–137 (QRSVGSLVLL…GRHCSLVRWR (66 aa)). The tract at residues 137-226 (RGGGFNNAKD…VDIKRNHYEL (90 aa)) is dimerization.

It belongs to the E2F/DP family. In terms of assembly, forms a heterodimer with Dp. Interacts with Rbf/Rbf1 and Rbf2. Component of the DREAM complex, which is at least composed of Myb, Caf1-55, mip40, mip120, mip130, E2f2, Dp, Rbf, Rbf2, lin-52, HDAC1/Rpd3 and l(3)mbt. Ubiquitously expressed in eye disk.

Its subcellular location is the nucleus. Transcriptional repressor that binds to E2f sites and represses E2f-regulated target genes. Binding to E2f sites requires transcription factor Dp. Acts synergistically with Rbf2 to antagonize E2f1-mediated transcriptional activation. Component of the DREAM complex, a multiprotein complex that can both act as a transcription activator or repressor depending on the context. The DREAM complex is required for recruiting E2f2 at differentiation-specific promoters and for stabilizing E2f2-Rbf complexes during S phase. During development, the complex represses transcription of developmentally controlled E2f target genes. During oogenesis, plays a role in restricting DNA synthesis to sites of chorion gene amplification in late stage ovarian follicle cells. Plays an inhibitory role in ionizing radiation (IR)-induced p53-independent apoptosis. May be involved in cell cycle exit by temporarily limiting CycE-dependent activation of E2f-regulated transcription. The sequence is that of Transcription factor E2F2 (E2f2) from Drosophila melanogaster (Fruit fly).